The following is a 205-amino-acid chain: Small ribosomal subunit protein uS4 (205 aa).

Basic and acidic residues predominate over residues 1–16 (MSKRESSKYKIDRRMG). The interval 1–46 (MSKRESSKYKIDRRMGENIWGRPKSPVNRREYGPGQHGQRRKSKLS) is disordered. An S4 RNA-binding domain is found at 94–157 (SRLDAIVYRA…KQLVTVLEAV (64 aa)).

This sequence belongs to the universal ribosomal protein uS4 family. In terms of assembly, part of the 30S ribosomal subunit. Contacts protein S5. The interaction surface between S4 and S5 is involved in control of translational fidelity.

Its function is as follows. One of the primary rRNA binding proteins, it binds directly to 16S rRNA where it nucleates assembly of the body of the 30S subunit. Functionally, with S5 and S12 plays an important role in translational accuracy. In Rhizobium meliloti (strain 1021) (Ensifer meliloti), this protein is Small ribosomal subunit protein uS4.